The following is a 589-amino-acid chain: Probable translation initiation factor IF-2 (589 aa).

Positions 3-224 (VRSPFVVVMG…AGVSQRFIPR (222 aa)) constitute a tr-type G domain. The G1 stretch occupies residues 12–19 (GHVDVGKT). 12–19 (GHVDVGKT) is a GTP binding site. Residues 37 to 41 (MITQH) are G2. The interval 78-81 (DTPG) is G3. Residues 78–82 (DTPGH) and 132–135 (NKLD) each bind GTP. Residues 132–135 (NKLD) form a G4 region. The interval 200 to 202 (SAV) is G5.

This sequence belongs to the TRAFAC class translation factor GTPase superfamily. Classic translation factor GTPase family. IF-2 subfamily.

Functionally, function in general translation initiation by promoting the binding of the formylmethionine-tRNA to ribosomes. Seems to function along with eIF-2. This chain is Probable translation initiation factor IF-2, found in Pyrobaculum neutrophilum (strain DSM 2338 / JCM 9278 / NBRC 100436 / V24Sta) (Thermoproteus neutrophilus).